The chain runs to 455 residues: ATP-dependent protease ATPase subunit HslU (455 aa).

Residues valine 23, 65-70, aspartate 266, glutamate 333, and arginine 405 each bind ATP; that span reads GVGKTE.

The protein belongs to the ClpX chaperone family. HslU subfamily. In terms of assembly, a double ring-shaped homohexamer of HslV is capped on each side by a ring-shaped HslU homohexamer. The assembly of the HslU/HslV complex is dependent on binding of ATP.

The protein resides in the cytoplasm. Functionally, ATPase subunit of a proteasome-like degradation complex; this subunit has chaperone activity. The binding of ATP and its subsequent hydrolysis by HslU are essential for unfolding of protein substrates subsequently hydrolyzed by HslV. HslU recognizes the N-terminal part of its protein substrates and unfolds these before they are guided to HslV for hydrolysis. This Xanthomonas oryzae pv. oryzae (strain MAFF 311018) protein is ATP-dependent protease ATPase subunit HslU.